Reading from the N-terminus, the 142-residue chain is Hemoglobin subunit alpha-1 (142 aa).

The Globin domain maps to 2–142 (LLSADDKKHI…VSTVLTSKYR (141 aa)). His-59 serves as a coordination point for O2. Heme b is bound at residue His-88.

Belongs to the globin family. Heterotetramer of two alpha chains and two beta chains. Red blood cells.

Involved in oxygen transport from the lung to the various peripheral tissues. This chain is Hemoglobin subunit alpha-1 (hba1), found in Xenopus laevis (African clawed frog).